The primary structure comprises 183 residues: MSRVGNRLLSIPSGVNVEVEKSLVKITGKLGTLSVPFDSKKLSVLNKDSMVIVKRANDEKETKMLHGTTNANINNALIGVNSGHTKKLKIVGVGYKAAVNGNKINLNLGYSHPIDLEIPAGLNVTCPQATEVVITGADKAVVGQFAAVIRSKRPPEPYKGKGVAYSNEVIIRKVGKTAEGSKK.

The protein belongs to the universal ribosomal protein uL6 family. In terms of assembly, part of the 50S ribosomal subunit.

This protein binds to the 23S rRNA, and is important in its secondary structure. It is located near the subunit interface in the base of the L7/L12 stalk, and near the tRNA binding site of the peptidyltransferase center. The polypeptide is Large ribosomal subunit protein uL6 (Malacoplasma penetrans (strain HF-2) (Mycoplasma penetrans)).